A 184-amino-acid chain; its full sequence is ADP-ribosylation factor-like protein 3 (184 aa).

Gly2 carries the N-myristoyl glycine lipid modification. GTP-binding positions include Gly24–Thr31, Asp68–Gln72, and Asn127–Asp130.

This sequence belongs to the small GTPase superfamily. Arf family.

It is found in the golgi apparatus. GTP-binding protein that may be involved in protein trafficking; may modulate vesicle budding and uncoating within the Golgi apparatus. The sequence is that of ADP-ribosylation factor-like protein 3 (arl-3) from Caenorhabditis elegans.